Consider the following 335-residue polypeptide: Phosphate acyltransferase (335 aa).

It belongs to the PlsX family. In terms of assembly, homodimer. Probably interacts with PlsY.

It localises to the cytoplasm. It catalyses the reaction a fatty acyl-[ACP] + phosphate = an acyl phosphate + holo-[ACP]. It functions in the pathway lipid metabolism; phospholipid metabolism. Its function is as follows. Catalyzes the reversible formation of acyl-phosphate (acyl-PO(4)) from acyl-[acyl-carrier-protein] (acyl-ACP). This enzyme utilizes acyl-ACP as fatty acyl donor, but not acyl-CoA. This chain is Phosphate acyltransferase, found in Clostridium botulinum (strain Langeland / NCTC 10281 / Type F).